The sequence spans 77 residues: Small ribosomal subunit protein bS18 (77 aa).

It belongs to the bacterial ribosomal protein bS18 family. Part of the 30S ribosomal subunit. Forms a tight heterodimer with protein bS6.

Binds as a heterodimer with protein bS6 to the central domain of the 16S rRNA, where it helps stabilize the platform of the 30S subunit. This is Small ribosomal subunit protein bS18 from Lactobacillus helveticus (strain DPC 4571).